The primary structure comprises 379 residues: Chaperone protein DnaJ (379 aa).

The region spanning 5–69 (DYYEVLGISK…NKRATIDQFG (65 aa)) is the J domain. The CR-type zinc finger occupies 136-218 (GTTKEISIRK…CHGKGTENKT (83 aa)). Zn(2+) is bound by residues C149, C152, C166, C169, C192, C195, C206, and C209. 4 CXXCXGXG motif repeats span residues 149–156 (CETCHGDG), 166–173 (CSYCNGAG), 192–199 (CPKCNGSG), and 206–213 (CPTCHGKG).

The protein belongs to the DnaJ family. As to quaternary structure, homodimer. Zn(2+) is required as a cofactor.

The protein resides in the cytoplasm. Functionally, participates actively in the response to hyperosmotic and heat shock by preventing the aggregation of stress-denatured proteins and by disaggregating proteins, also in an autonomous, DnaK-independent fashion. Unfolded proteins bind initially to DnaJ; upon interaction with the DnaJ-bound protein, DnaK hydrolyzes its bound ATP, resulting in the formation of a stable complex. GrpE releases ADP from DnaK; ATP binding to DnaK triggers the release of the substrate protein, thus completing the reaction cycle. Several rounds of ATP-dependent interactions between DnaJ, DnaK and GrpE are required for fully efficient folding. Also involved, together with DnaK and GrpE, in the DNA replication of plasmids through activation of initiation proteins. The chain is Chaperone protein DnaJ from Staphylococcus aureus.